The sequence spans 73 residues: Conotoxin im23b (73 aa).

Positions 1 to 22 are cleaved as a signal peptide; sequence MIMRMTLTLFVLVVMTAASASG. Positions 23 to 28 are excised as a propeptide; it reads DALTEA. Cystine bridges form between Cys-34–Cys-41, Cys-45–Cys-55, and Cys-56–Cys-71.

This sequence belongs to the conotoxin K superfamily. Expressed by the venom duct.

The protein localises to the secreted. Its function is as follows. Neurotoxin that induces excitatory symptoms in mice following intracranial administration. No symptoms are observed after intraperitoneal and intravenous (tail vein) injections. In Conus imperialis (Imperial cone), this protein is Conotoxin im23b.